A 95-amino-acid polypeptide reads, in one-letter code: Protein S100-A1 (95 aa).

2 consecutive EF-hand domains span residues 12-47 (IKVF…FLSA) and 49-84 (KDPM…LTVA). Lys-27, Glu-32, Asp-62, Asn-64, Asp-66, Glu-68, and Glu-73 together coordinate Ca(2+).

It belongs to the S-100 family. Dimer of either two alpha chains, or two beta chains, or one alpha and one beta chain. Also forms heterodimers with S100P. Interacts with AGER. Interacts with CAPZA1. Interacts with FKBP4. Interacts with RYR1 and RYR2. Interacts with CACYBP in a calcium-dependent manner. Interacts with PPP5C (via TPR repeats); the interaction is calcium-dependent and modulates PPP5C activity. Interacts with ATP2A2 and PLN in a Ca(2+)-dependent manner. Interacts with mitochondrial F1-ATPase subunits ATP5F1A and ATP5F1B; these interactions increase F1-ATPase activity. Glutathionylated; glutathionylation increases affinity to calcium about 10-fold.

It localises to the cytoplasm. It is found in the sarcoplasmic reticulum. The protein resides in the mitochondrion. Its function is as follows. Small calcium binding protein that plays important roles in several biological processes such as Ca(2+) homeostasis, chondrocyte biology and cardiomyocyte regulation. In response to an increase in intracellular Ca(2+) levels, binds calcium which triggers conformational changes. These changes allow interactions with specific target proteins and modulate their activity. Regulates a network in cardiomyocytes controlling sarcoplasmic reticulum Ca(2+) cycling and mitochondrial function through interaction with the ryanodine receptors RYR1 and RYR2, sarcoplasmic reticulum Ca(2+)-ATPase/ATP2A2 and mitochondrial F1-ATPase. Facilitates diastolic Ca(2+) dissociation and myofilament mechanics in order to improve relaxation during diastole. The sequence is that of Protein S100-A1 (s100a1) from Misgurnus fossilis (Weatherfish).